A 687-amino-acid chain; its full sequence is Polyphosphate kinase (687 aa).

N45 serves as a coordination point for ATP. R375 and R405 together coordinate Mg(2+). H435 functions as the Phosphohistidine intermediate in the catalytic mechanism. Y472, R568, and H596 together coordinate ATP.

Belongs to the polyphosphate kinase 1 (PPK1) family. Mg(2+) serves as cofactor. An intermediate of this reaction is the autophosphorylated ppk in which a phosphate is covalently linked to a histidine residue through a N-P bond.

It catalyses the reaction [phosphate](n) + ATP = [phosphate](n+1) + ADP. Functionally, catalyzes the reversible transfer of the terminal phosphate of ATP to form a long-chain polyphosphate (polyP). The polypeptide is Polyphosphate kinase (Burkholderia ambifaria (strain MC40-6)).